We begin with the raw amino-acid sequence, 102 residues long: RNA-binding protein Hfq (102 aa).

The region spanning 9 to 68 (DPFLNALRRERVPVSIYLVNGIKLQGQIESFDQFVILLKNTVSQMVYKHAISTVVPSRPV) is the Sm domain. Residues 63 to 102 (VPSRPVSHHSNNAGGGTSSNYHHGSSPQNTSAQQDSEETE) are disordered. The span at 70-96 (HHSNNAGGGTSSNYHHGSSPQNTSAQQ) shows a compositional bias: polar residues.

The protein belongs to the Hfq family. Homohexamer.

In terms of biological role, RNA chaperone that binds small regulatory RNA (sRNAs) and mRNAs to facilitate mRNA translational regulation in response to envelope stress, environmental stress and changes in metabolite concentrations. Also binds with high specificity to tRNAs. The polypeptide is RNA-binding protein Hfq (Shigella dysenteriae serotype 1 (strain Sd197)).